A 276-amino-acid polypeptide reads, in one-letter code: MGTIFDLKNISYSYVGEITVLKDISFKVDPGEQISIIGSNGSGKSTLLSLLDGLIYPTVGEFYAFDNKIVEEVFDTIKDNEFRSYFRTKVGFLFQNSDVQLFSPTVFEEVAFGPLQLNITPEEVKTRVLEVLEMMELTKLKDRSPHTLSGGEKKKLCIATVLATNPDVLLLDEPTAGLDPRTQLWLTELLQELGSMGKTIIIATHDLELVEQISKRAIVMGEDHRIVVDGDVEKVLNDLNLLLSTNLIHEHMHMHGKLVHEHLHAHDKEHAHEHKN.

The ABC transporter domain occupies 5–247 (FDLKNISYSY…DLNLLLSTNL (243 aa)). 38–45 (GSNGSGKS) contacts ATP.

It belongs to the ABC transporter superfamily.

It localises to the cell membrane. Functionally, probably part of an ABC transporter complex. Responsible for energy coupling to the transport system. The sequence is that of Putative ABC transporter ATP-binding protein MA_4021 from Methanosarcina acetivorans (strain ATCC 35395 / DSM 2834 / JCM 12185 / C2A).